A 111-amino-acid polypeptide reads, in one-letter code: Urease subunit beta (111 aa).

This sequence belongs to the urease beta subunit family. Heterotrimer of UreA (gamma), UreB (beta) and UreC (alpha) subunits. Three heterotrimers associate to form the active enzyme.

The protein localises to the cytoplasm. The enzyme catalyses urea + 2 H2O + H(+) = hydrogencarbonate + 2 NH4(+). Its pathway is nitrogen metabolism; urea degradation; CO(2) and NH(3) from urea (urease route): step 1/1. This Geobacillus kaustophilus (strain HTA426) protein is Urease subunit beta.